We begin with the raw amino-acid sequence, 168 residues long: Peptide deformylase 2 (168 aa).

Positions 91 and 133 each coordinate Fe cation. The active site involves Glu-134. His-137 serves as a coordination point for Fe cation.

It belongs to the polypeptide deformylase family. Requires Fe(2+) as cofactor.

The catalysed reaction is N-terminal N-formyl-L-methionyl-[peptide] + H2O = N-terminal L-methionyl-[peptide] + formate. Its function is as follows. Removes the formyl group from the N-terminal Met of newly synthesized proteins. Requires at least a dipeptide for an efficient rate of reaction. N-terminal L-methionine is a prerequisite for activity but the enzyme has broad specificity at other positions. This is Peptide deformylase 2 from Vibrio parahaemolyticus serotype O3:K6 (strain RIMD 2210633).